Reading from the N-terminus, the 287-residue chain is Putative glutamate--cysteine ligase regulatory subunit (287 aa).

The protein belongs to the aldo/keto reductase family. Glutamate--cysteine ligase light chain subfamily. In terms of assembly, heterodimer of a catalytic heavy chain and a regulatory light chain.

Its subcellular location is the cytoplasm. Its pathway is sulfur metabolism; glutathione biosynthesis; glutathione from L-cysteine and L-glutamate: step 1/2. The protein is Putative glutamate--cysteine ligase regulatory subunit of Schizosaccharomyces pombe (strain 972 / ATCC 24843) (Fission yeast).